Consider the following 134-residue polypeptide: Crustacean hyperglycemic hormones isoform B (134 aa).

An N-terminal signal peptide occupies residues 1-24 (MFACRTLCLVVVMVASLGTSGVGG). Residue glutamine 61 is modified to Pyrrolidone carboxylic acid. Phenylalanine 63 is subject to D-phenylalanine; in form CHH-B-II. Cystine bridges form between cysteine 67–cysteine 103, cysteine 83–cysteine 99, and cysteine 86–cysteine 112. Valine 132 carries the valine amide modification.

It belongs to the arthropod CHH/MIH/GIH/VIH hormone family. Post-translationally, stereoinversion of L-Phe (form CHH-B-I) to D-Phe (form CHH-B-II). Produced by the medulla terminalis X-organ in the eyestalks and transported to the sinus gland where they are stored and released. Present also in the ventral nervous system.

The protein resides in the secreted. In terms of biological role, hormone found in the sinus gland of isopods and decapods which controls the blood sugar level. Has a secretagogue action over the amylase released from the midgut gland. May act as a stress hormone and may be involved in the control of molting and reproduction. This chain is Crustacean hyperglycemic hormones isoform B, found in Homarus americanus (American lobster).